The primary structure comprises 137 residues: Large-conductance mechanosensitive channel (137 aa).

A run of 3 helical transmembrane segments spans residues 15–35, 38–58, and 80–100; these read IDLAIGVIIGGAFGGLVNSIV, IFMPIIGLITGGIDFSNMFIQ, and GNFITLLINFLIIAWVLFLFV.

The protein belongs to the MscL family. Homopentamer.

The protein localises to the cell inner membrane. Functionally, channel that opens in response to stretch forces in the membrane lipid bilayer. May participate in the regulation of osmotic pressure changes within the cell. This chain is Large-conductance mechanosensitive channel, found in Bartonella henselae (strain ATCC 49882 / DSM 28221 / CCUG 30454 / Houston 1) (Rochalimaea henselae).